Reading from the N-terminus, the 139-residue chain is Holo-[acyl-carrier-protein] synthase (139 aa).

Residues aspartate 8 and glutamate 57 each coordinate Mg(2+).

The protein belongs to the P-Pant transferase superfamily. AcpS family. Requires Mg(2+) as cofactor.

Its subcellular location is the cytoplasm. It catalyses the reaction apo-[ACP] + CoA = holo-[ACP] + adenosine 3',5'-bisphosphate + H(+). Functionally, transfers the 4'-phosphopantetheine moiety from coenzyme A to a Ser of acyl-carrier-protein. The chain is Holo-[acyl-carrier-protein] synthase from Sinorhizobium fredii (strain NBRC 101917 / NGR234).